Here is a 234-residue protein sequence, read N- to C-terminus: Sugar fermentation stimulation protein homolog (234 aa).

The protein belongs to the SfsA family.

The sequence is that of Sugar fermentation stimulation protein homolog from Bartonella quintana (strain Toulouse) (Rochalimaea quintana).